A 201-amino-acid chain; its full sequence is UPF0301 protein MMAR_0053 (201 aa).

This sequence belongs to the UPF0301 (AlgH) family.

This is UPF0301 protein MMAR_0053 from Mycobacterium marinum (strain ATCC BAA-535 / M).